The chain runs to 515 residues: 2,3-bisphosphoglycerate-independent phosphoglycerate mutase (515 aa).

Mn(2+)-binding residues include Asp14 and Ser64. Residue Ser64 is the Phosphoserine intermediate of the active site. Residues His125, 155-156, Arg187, Arg193, 263-266, and Lys337 each bind substrate; these read RD and RADR. Residues Asp404, His408, Asp445, His446, and His464 each coordinate Mn(2+).

Belongs to the BPG-independent phosphoglycerate mutase family. Monomer. Mn(2+) serves as cofactor.

It catalyses the reaction (2R)-2-phosphoglycerate = (2R)-3-phosphoglycerate. It functions in the pathway carbohydrate degradation; glycolysis; pyruvate from D-glyceraldehyde 3-phosphate: step 3/5. In terms of biological role, catalyzes the interconversion of 2-phosphoglycerate and 3-phosphoglycerate. The polypeptide is 2,3-bisphosphoglycerate-independent phosphoglycerate mutase (Pseudomonas aeruginosa (strain UCBPP-PA14)).